The chain runs to 647 residues: XK-related protein 4 (647 aa).

The chain crosses the membrane as a helical span at residues 142 to 162 (WFGLTLFFVVLGSLSVQVFSF). The disordered stretch occupies residues 193-238 (VSSGSAAGEGEARPSTPQRQASNASKSNIAATNSGSNSNGATRTSG). Ser-197 carries the phosphoserine modification. Over residues 207–236 (STPQRQASNASKSNIAATNSGSNSNGATRT) the composition is skewed to polar residues. Helical transmembrane passes span 245 to 265 (CSFCIWLLQSLIHILQLGQVW), 328 to 348 (LQALQGFTAAASLVSLAWALA), 362 to 382 (KPISYMAVIIQFCWHFFTIAA), 393 to 415 (VFQLYFGIFIVLHWCIMTFWIVH), 425 to 445 (WEEIVFDMVVGIIYIFSWFNV), 454 to 474 (LFIYYFVILLENTALSALWYL), and 484 to 504 (FAIPALCVVFSSFLTGVVFML).

Belongs to the XK family. In terms of assembly, homodimer; homodimerization takes place upon caspase cleavage. Interacts with the processed C-terminus of XRCC4 (protein XRCC4, C-terminus); interaction promotes the phospholipid scramblase activity. Post-translationally, undergoes proteolytic processing by caspase-3 (CASP3), caspase-6 (CASP6) and caspase-7 (CASP7) to generate the XK-related protein 4, processed form, leading to its activation.

It is found in the cell membrane. The enzyme catalyses a 1,2-diacyl-sn-glycero-3-phospho-L-serine(in) = a 1,2-diacyl-sn-glycero-3-phospho-L-serine(out). Phospholipid scramblase activity is activated upon caspase cleavage to generate the XK-related protein 4, processed form. Does not act prior the onset of apoptosis. With respect to regulation, homodimerizes upon caspase cleavage. Phospholipid scramblase activity is activated following interaction with the processed C-terminus of XRCC4 (protein XRCC4, C-terminus). Its function is as follows. Phospholipid scramblase that promotes phosphatidylserine exposure on apoptotic cell surface. Phosphatidylserine is a specific marker only present at the surface of apoptotic cells and acts as a specific signal for engulfment. The protein is XK-related protein 4 of Rattus norvegicus (Rat).